A 438-amino-acid polypeptide reads, in one-letter code: Adenosylhomocysteinase (438 aa).

The substrate site is built by T64, D139, and E164. NAD(+) is bound at residue 165–167 (TTT). Residues K194 and D198 each coordinate substrate. NAD(+) contacts are provided by residues N199, 228–233 (GYGDVG), E251, N286, 307–309 (IGH), and N352.

The protein belongs to the adenosylhomocysteinase family. Requires NAD(+) as cofactor.

The protein resides in the cytoplasm. It carries out the reaction S-adenosyl-L-homocysteine + H2O = L-homocysteine + adenosine. It functions in the pathway amino-acid biosynthesis; L-homocysteine biosynthesis; L-homocysteine from S-adenosyl-L-homocysteine: step 1/1. Its function is as follows. May play a key role in the regulation of the intracellular concentration of adenosylhomocysteine. This chain is Adenosylhomocysteinase, found in Coxiella burnetii (strain RSA 493 / Nine Mile phase I).